The sequence spans 136 residues: Globin CTP-III (136 aa).

Residues 1 to 136 (LSADQISTVQ…TFFGMIFSKM (136 aa)) form the Globin domain. His87 serves as a coordination point for heme b.

The protein belongs to the globin family. As to quaternary structure, monomer.

This Chironomus thummi piger (Midge) protein is Globin CTP-III.